Here is a 423-residue protein sequence, read N- to C-terminus: UPF0229 protein VV1_2091 (423 aa).

Residues Q81–G111 are disordered. Residues G93–D102 are compositionally biased toward gly residues.

It belongs to the UPF0229 family.

This Vibrio vulnificus (strain CMCP6) protein is UPF0229 protein VV1_2091.